The chain runs to 427 residues: Ribitol transporter (427 aa).

Over 1 to 7 (MSVNNKQ) the chain is Cytoplasmic. The helical transmembrane segment at 8-28 (WYGLPLNLIWGYVAIAVFMTG) threads the bilayer. The Extracellular segment spans residues 29–51 (DGFELAFLSHYIKALGFTPAQAS). The helical transmembrane segment at 52–72 (FAFTLYGLAAALSAWVSGVVA) threads the bilayer. Residues 73–79 (EIITPRK) lie on the Cytoplasmic side of the membrane. Residues 80-100 (AMLIGFVLWCVFHVLFLVFGL) traverse the membrane as a helical segment. At 101-107 (GRANYAL) the chain is on the extracellular side. The chain crosses the membrane as a helical span at residues 108–128 (ILLFYGIRGLAYPLFLYSFIV). Residues 129–141 (AIIHNVRSDSSSS) lie on the Cytoplasmic side of the membrane. Residues 142 to 162 (ALGWFWAVYSVGIGVFGSYIP) form a helical membrane-spanning segment. Residues 163–171 (SFTIPHIGE) are Extracellular-facing. Residues 172 to 192 (MGTLWLALLFCATGGIIALVS) traverse the membrane as a helical segment. At 193 to 238 (MRHTETPRHMQNLTTREKFAELGRAATLLYTNRSILFSSIVRIINT) the chain is on the cytoplasmic side. The chain crosses the membrane as a helical span at residues 239–259 (LSLFGFAVIMPMMFVDELGFT). Topologically, residues 260–263 (TSEW) are extracellular. A helical membrane pass occupies residues 264-284 (LQVWAAFFFTTIFSNVFWGIV). Residues 285–295 (AEKMGWMKVIR) are Cytoplasmic-facing. The chain crosses the membrane as a helical span at residues 296–316 (WFGCIGMALSSLAFYYLPQHF). Over 317–323 (GHNFAMA) the chain is Extracellular. Residues 324–344 (LVPAIALGIFVAAFVPMAAVF) form a helical membrane-spanning segment. Residues 345-360 (PALEPNHKGAAISVYN) are Cytoplasmic-facing. A helical transmembrane segment spans residues 361–381 (LSAGLSNFLAPAIAVVLLPYF). Over 382-383 (ST) the chain is Extracellular. The helical transmembrane segment at 384–404 (IGVVIAYTALYILAFFLCPLI) threads the bilayer. Residues 405 to 427 (RVEQPGFTSDQHAKPFTANAAES) lie on the Cytoplasmic side of the membrane.

It belongs to the major facilitator superfamily. Sugar transporter (TC 2.A.1.1) family. CsbX subfamily.

Its subcellular location is the cell membrane. In Klebsiella pneumoniae, this protein is Ribitol transporter (rbtT).